Consider the following 769-residue polypeptide: MASRAPLRAARSPQDPGGRAAPAATGRAPLPSAGWCPLPPGRNSSSRPRLLLLLLLLLPDAGAQKGDGCGHTVLGPESGTLTSINYPHTYPNSTVCKWEIRVKTGERIRIKFGDFDIEDSDYCHLNYLKIFNGIGVSRTEIGKYCGLGLQMNQSIESKGSEITVLFMSGIHASGRGFLASYSVIDKQDLITCLDTVSNFLEPEFSKYCPAGCLLPFAEISGTIPHGYRDSSPLCMAGIHAGVVSDVLGGQISVVISKGTPYYESSLANNVTSMVGYLSTSLFTFKTSGCYGTLGMESGVIADPQITASSVLEWTDHMGQENSWKPEKARLRKPGPPWAAFATDEHQWLQIDLNKEKKITGIVTTGSTLIEHNYYVSAYRVLYSDDGQKWTVYREPGAAQDKIFQGNKDYHKDVRNNFLPPIIARFIRVNPVQWQQKIAMKVELLGCQFTLKGRLPKLTQPPPPRNSNNLKNTTVHPKLGRAPKFTQALQPRSRNDLPLLPAQTTATPDVKNTTVTPSVTKDVALAAVLVPVLVMALTTLILILVCAWHWRNRKKKAEGTYDLPHWDRAGWWKGVKQLLPAKSVEHEETPVRYSNSEVSHLSPREVTTVLQADSAEYAQPLVGGIVGTLHQRSTFKPEEGKEASYADLDPYNAPVQEVYHAYAEPLPVTGPEYATPIVMDMSGHSTASVGLPSTSTFRTAGNQPPALVGTYNTLLSRTDSCSSGQAQYDTPKGGKPAAAPEELVYQVPQSTQEASGAGRDEKFDAFKETL.

The span at 1–29 shows a compositional bias: low complexity; that stretch reads MASRAPLRAARSPQDPGGRAAPAATGRAP. Residues 1–39 form a disordered region; that stretch reads MASRAPLRAARSPQDPGGRAAPAATGRAPLPSAGWCPLP. The first 63 residues, 1–63, serve as a signal peptide directing secretion; that stretch reads MASRAPLRAA…LLLLLPDAGA (63 aa). Topologically, residues 64-523 are extracellular; the sequence is QKGDGCGHTV…VTPSVTKDVA (460 aa). 2 disulfide bridges follow: C69/C96 and C123/C145. One can recognise a CUB domain in the interval 69 to 184; the sequence is CGHTVLGPES…RGFLASYSVI (116 aa). N92 carries N-linked (GlcNAc...) asparagine glycosylation. N152 carries an N-linked (GlcNAc...) asparagine glycan. One can recognise an LCCL domain in the interval 184–282; the sequence is IDKQDLITCL…MVGYLSTSLF (99 aa). C212 and C234 are joined by a disulfide. N269 is a glycosylation site (N-linked (GlcNAc...) asparagine). Residues C289 and C446 are joined by a disulfide bond. An F5/8 type C domain is found at 289 to 446; it reads CYGTLGMESG…IAMKVELLGC (158 aa). A disordered region spans residues 455-476; sequence PKLTQPPPPRNSNNLKNTTVHP. Residues 465–474 are compositionally biased toward polar residues; the sequence is NSNNLKNTTV. N471 and N511 each carry an N-linked (GlcNAc...) asparagine glycan. The helical transmembrane segment at 524–544 threads the bilayer; sequence LAAVLVPVLVMALTTLILILV. Residues 545–769 are Cytoplasmic-facing; the sequence is CAWHWRNRKK…EKFDAFKETL (225 aa). S601 is modified (phosphoserine). Residues 719-769 form a disordered region; sequence SCSSGQAQYDTPKGGKPAAAPEELVYQVPQSTQEASGAGRDEKFDAFKETL. Residues 757-769 are compositionally biased toward basic and acidic residues; sequence GRDEKFDAFKETL.

It is found in the membrane. This is Discoidin, CUB and LCCL domain-containing protein 2 (Dcbld2) from Rattus norvegicus (Rat).